A 211-amino-acid chain; its full sequence is ATP phosphoribosyltransferase (211 aa).

The protein belongs to the ATP phosphoribosyltransferase family. Short subfamily. In terms of assembly, heteromultimer composed of HisG and HisZ subunits.

It localises to the cytoplasm. It catalyses the reaction 1-(5-phospho-beta-D-ribosyl)-ATP + diphosphate = 5-phospho-alpha-D-ribose 1-diphosphate + ATP. It functions in the pathway amino-acid biosynthesis; L-histidine biosynthesis; L-histidine from 5-phospho-alpha-D-ribose 1-diphosphate: step 1/9. Catalyzes the condensation of ATP and 5-phosphoribose 1-diphosphate to form N'-(5'-phosphoribosyl)-ATP (PR-ATP). Has a crucial role in the pathway because the rate of histidine biosynthesis seems to be controlled primarily by regulation of HisG enzymatic activity. The chain is ATP phosphoribosyltransferase from Pseudomonas fluorescens (strain SBW25).